The chain runs to 916 residues: MATLKPSFTVSPPNSNPIRFGSFPPQCFLRVPKPRRLILPRFRKTTGGGGGLIRCELPDFHLSATATTVSGVSTVNLVDQVQIPKGEMWSVHKFGGTCVGNSQRIRNVAEVIINDNSERKLVVVSAMSKVTDMMYDLIRKAQSRDDSYLSALEAVLEKHRLTARDLLDGDDLASFLSHLHNDISNLKAMLRAIYIAGHASESFSDFVAGHGELWSAQMLSYVVRKTGLECKWMDTRDVLIVNPTSSNQVDPDFGESEKRLDKWFSLNPSKIIIATGFIASTPQNIPTTLKRDGSDFSAAIMGALLRARQVTIWTDVDGVYSADPRKVNEAVILQTLSYQEAWEMSYFGANVLHPRTIIPVMRYNIPIVIRNIFNLSAPGTIICQPPEDDYDLKLTTPVKGFATIDNLALINVEGTGMAGVPGTASDIFGCVKDVGANVIMISQASSEHSVCFAVPEKEVNAVSEALRSRFSEALQAGRLSQIEVIPNCSILAAVGQKMASTPGVSCTLFSALAKANINVRAISQGCSEYNVTVVIKREDSVKALRAVHSRFFLSRTTLAMGIVGPGLIGATLLDQLRDQAAVLKQEFNIDLRVLGITGSKKMLLSDIGIDLSRWRELLNEKGTEADLDKFTQQVHGNHFIPNSVVVDCTADSAIASRYYDWLRKGIHVITPNKKANSGPLDQYLKLRDLQRKSYTHYFYEATVGAGLPIISTLRGLLETGDKILRIEGICSGTLSYLFNNFVGDRSFSEVVTEAKNAGFTEPDPRDDLSGTDVARKVIILARESGLKLDLADLPIRSLVPEPLKGCTSVEEFMEKLPQYDGDLAKERLDAENSGEVLRYVGVVDAVNQKGTVELRRYKKEHPFAQLAGSDNIIAFTTTRYKDHPLIVRGPGAGAQVTAGGIFSDILRLASYLGAPS.

Residues 1–87 constitute a chloroplast transit peptide; sequence MATLKPSFTV…VDQVQIPKGE (87 aa). The aspartokinase stretch occupies residues 88–336; that stretch reads MWSVHKFGGT…VNEAVILQTL (249 aa). An interface region spans residues 337 to 562; that stretch reads SYQEAWEMSY…LSRTTLAMGI (226 aa). ACT domains are found at residues 412–487 and 493–570; these read VEGT…VIPN and AVGQ…LIGA. The interval 563–916 is homoserine dehydrogenase; sequence VGPGLIGATL…RLASYLGAPS (354 aa). Ile-568 contacts NAD(+). 4 residues coordinate NADP(+): Ile-568, Lys-600, Thr-649, and Lys-673. Ile-568 is a binding site for NADPH. Residue Thr-649 coordinates NAD(+). Residues Thr-649 and Lys-673 each contribute to the NADPH site. Positions 700, 703, 705, and 707 each coordinate Na(+). Residues Gly-758 and Glu-761 each contribute to the NADP(+) site. Residues Glu-761 and Asp-772 each contribute to the L-homoserine site. Lys-776 acts as the Proton donor in catalysis. Gly-893 provides a ligand contact to NAD(+). Residue Gly-893 coordinates NADP(+). An NADPH-binding site is contributed by Gly-893.

This sequence in the N-terminal section; belongs to the aspartokinase family. In the C-terminal section; belongs to the homoserine dehydrogenase family. Homo- or heterodimer. It depends on a metal cation as a cofactor.

It localises to the plastid. The protein localises to the chloroplast. The enzyme catalyses L-homoserine + NADP(+) = L-aspartate 4-semialdehyde + NADPH + H(+). It carries out the reaction L-homoserine + NAD(+) = L-aspartate 4-semialdehyde + NADH + H(+). The catalysed reaction is L-aspartate + ATP = 4-phospho-L-aspartate + ADP. The protein operates within amino-acid biosynthesis; L-lysine biosynthesis via DAP pathway; (S)-tetrahydrodipicolinate from L-aspartate: step 1/4. It participates in amino-acid biosynthesis; L-methionine biosynthesis via de novo pathway; L-homoserine from L-aspartate: step 1/3. Its pathway is amino-acid biosynthesis; L-methionine biosynthesis via de novo pathway; L-homoserine from L-aspartate: step 3/3. It functions in the pathway amino-acid biosynthesis; L-threonine biosynthesis; L-threonine from L-aspartate: step 1/5. The protein operates within amino-acid biosynthesis; L-threonine biosynthesis; L-threonine from L-aspartate: step 3/5. With respect to regulation, threonine interaction with Gln-443 leads to inhibition of aspartate kinase activity and facilitates the binding of a second threonine on Gln-524, leading to a partial inhibition of homoserine dehydrogenase activity (25% of activity remaining at saturation with threonine). Homoserine dehydrogenase activity is also partially inhibited by cysteine (15% of activity remaining at saturation with cysteine). No synergy between threonine and cysteine for the inhibition. 13-fold activation of aspartate kinase activity by cysteine, isoleucine, valine, serine and alanine at 2.5 mM and 4-fold activation by leucine at 2.5 mM, but no activation of homoserine dehydrogenase activity. Functionally, bifunctional aspartate kinase and homoserine dehydrogenase that catalyzes the first and the third steps toward the synthesis of lysine, methionine and threonine from aspartate. The sequence is that of Bifunctional aspartokinase/homoserine dehydrogenase 2, chloroplastic (AKHSDH2) from Arabidopsis thaliana (Mouse-ear cress).